A 122-amino-acid polypeptide reads, in one-letter code: Large ribosomal subunit protein uL14 (122 aa).

The protein belongs to the universal ribosomal protein uL14 family. Part of the 50S ribosomal subunit. Forms a cluster with proteins L3 and L19. In the 70S ribosome, L14 and L19 interact and together make contacts with the 16S rRNA in bridges B5 and B8.

In terms of biological role, binds to 23S rRNA. Forms part of two intersubunit bridges in the 70S ribosome. This Beijerinckia indica subsp. indica (strain ATCC 9039 / DSM 1715 / NCIMB 8712) protein is Large ribosomal subunit protein uL14.